A 122-amino-acid polypeptide reads, in one-letter code: Large ribosomal subunit protein uL14 (122 aa).

It belongs to the universal ribosomal protein uL14 family. As to quaternary structure, part of the 50S ribosomal subunit. Forms a cluster with proteins L3 and L19. In the 70S ribosome, L14 and L19 interact and together make contacts with the 16S rRNA in bridges B5 and B8.

In terms of biological role, binds to 23S rRNA. Forms part of two intersubunit bridges in the 70S ribosome. The chain is Large ribosomal subunit protein uL14 from Shewanella baltica (strain OS223).